A 356-amino-acid chain; its full sequence is MRDRFLRACRRQPVDRTPIWLMRQAGRYMPEYRAVRERYGFLQMVKTPEIAAEVTLQPIAAFGVDAAIIFADILPPLEGLGLRLTYEKGEGPVIHNPIRHPHDVATLHPCDPRETVAYTLDAVRLVKRELNGLPLIGFSGAPFTLASYAIEGGGSKEYRLTKRFMYEQPTAWHDLMERLGTLVAEYLIAQVEAGADAVQIFDSWAGTLAPADYRAYVLRHTQNVVATVRARLGAAAPPIIYFGTDMAGLAGELRQLGTDVLGVDWRIDLDVAWAQYGYEHAVQGNLDPMTLFAPPELIASRAREILQRAGGRPGHIFNLGHGILTETPVEHVRYLVEFVQSYPLPTTTPALQEVMQ.

Substrate-binding positions include 23-27, D72, Y148, S203, and H321; that span reads RQAGR.

This sequence belongs to the uroporphyrinogen decarboxylase family. As to quaternary structure, homodimer.

The protein resides in the cytoplasm. The catalysed reaction is uroporphyrinogen III + 4 H(+) = coproporphyrinogen III + 4 CO2. The protein operates within porphyrin-containing compound metabolism; protoporphyrin-IX biosynthesis; coproporphyrinogen-III from 5-aminolevulinate: step 4/4. Functionally, catalyzes the decarboxylation of four acetate groups of uroporphyrinogen-III to yield coproporphyrinogen-III. The sequence is that of Uroporphyrinogen decarboxylase from Chloroflexus aggregans (strain MD-66 / DSM 9485).